A 653-amino-acid chain; its full sequence is Protease 1 (653 aa).

The or 27 signal peptide spans 1–20 (MKRICGSLLLLGLSISAALA). Residues 21–205 (APASRPAAFD…RRLAAASGEK (185 aa)) constitute a propeptide that is removed on maturation. Disulfide bonds link cysteine 211/cysteine 421, cysteine 217/cysteine 285, and cysteine 241/cysteine 263. Active-site charge relay system residues include histidine 262, aspartate 318, and serine 399. The PKD domain maps to 474 to 553 (NTPPVANFTS…TNTKTGSVTV (80 aa)). Residues 474-653 (NTPPVANFTS…AAQRAPGSCG (180 aa)) constitute a propeptide, thr/Ser-rich. The P/Homo B domain maps to 555–653 (GGPGAQTYTN…AAQRAPGSCG (99 aa)).

Belongs to the peptidase S1 family. Three disulfide bonds are present.

Its subcellular location is the secreted. The catalysed reaction is Preferential cleavage: Lys-|-Xaa, including Lys-|-Pro.. This is Protease 1 from Achromobacter lyticus.